A 475-amino-acid chain; its full sequence is Glycogen synthase (475 aa).

Lys15 contributes to the ADP-alpha-D-glucose binding site.

Belongs to the glycosyltransferase 1 family. Bacterial/plant glycogen synthase subfamily.

It carries out the reaction [(1-&gt;4)-alpha-D-glucosyl](n) + ADP-alpha-D-glucose = [(1-&gt;4)-alpha-D-glucosyl](n+1) + ADP + H(+). It functions in the pathway glycan biosynthesis; glycogen biosynthesis. Its function is as follows. Synthesizes alpha-1,4-glucan chains using ADP-glucose. This chain is Glycogen synthase, found in Clostridium kluyveri (strain ATCC 8527 / DSM 555 / NBRC 12016 / NCIMB 10680 / K1).